The following is a 697-amino-acid chain: Exocyst complex component 7 (697 aa).

Positions 1–384 (MIPPQEASAR…FSTVLTVFPI (384 aa)) are SEC8 and ARHQ binding. Coiled coils occupy residues 5 to 42 (QEAS…TRNM) and 63 to 85 (VHKQ…SCLD). Ser-133 carries the post-translational modification Phosphoserine. A disordered region spans residues 238-270 (FRKSSSSSGVPYSPAIPNKRKDTPTKKPIKRPG).

Belongs to the EXO70 family. As to quaternary structure, the exocyst complex is composed of EXOC1, EXOC2, EXOC3, EXOC4, EXOC5, EXOC6, EXOC7 and EXOC8. Interacts with RAB11FIP3. Interacts with ARHQ in a GTP-dependent manner.

It is found in the cytoplasm. It localises to the cytosol. The protein resides in the cell membrane. The protein localises to the midbody. Its subcellular location is the midbody ring. Functionally, component of the exocyst complex involved in the docking of exocytic vesicles with fusion sites on the plasma membrane. In adipocytes, plays a crucial role in targeting SLC2A4 vesicle to the plasma membrane in response to insulin, perhaps directing the vesicle to the precise site of fusion. It is required for neuron survival and plays an essential role in cortical development. This is Exocyst complex component 7 (Exoc7) from Mus musculus (Mouse).